Consider the following 456-residue polypeptide: Probable galactarate/D-glucarate transporter GudP (456 aa).

Transmembrane regions (helical) follow at residues 11–31 (YLIL…RATI), 51–71 (YIFS…GWLL), 78–96 (KVYA…LQGY), 102–119 (ISTA…VGLA), 246–266 (IYLG…WFPV), 280–300 (GIIA…GGVI), 317–337 (TPIV…YVDA), 341–361 (VVCF…GWAV), 381–401 (FGNL…AATG), and 408–428 (SSWV…VGEI).

The protein belongs to the major facilitator superfamily. Phthalate permease family.

Its subcellular location is the cell inner membrane. It carries out the reaction galactarate(in) + H(+)(in) = galactarate(out) + H(+)(out). The catalysed reaction is D-glucarate(in) + H(+)(in) = D-glucarate(out) + H(+)(out). Functionally, probably involved in the uptake of galactarate and/or D-glucarate. This Pseudomonas putida (Arthrobacter siderocapsulatus) protein is Probable galactarate/D-glucarate transporter GudP (gudP).